Reading from the N-terminus, the 400-residue chain is NADPH dehydrogenase 1 (400 aa).

The FMN site is built by threonine 38 and glutamine 115. Substrate contacts are provided by histidine 192 and asparagine 195. The Proton donor role is filled by tyrosine 197. Positions 244 and 349 each coordinate FMN. Tyrosine 376 is a substrate binding site.

In terms of assembly, homodimer or heterodimer. The cofactor is FMN.

It carries out the reaction A + NADPH + H(+) = AH2 + NADP(+). Flavin-dependent enoate reductase that catalyzes the chemo- and stereoslective hydrogenation of electron-poor alkenes. The enzyme is reduced by NADPH, and oxygen, quinones, and alpha,beta-unsaturated aldehydes and ketones can act as electron acceptors to complete catalytic turnover. The physiological oxidant remains elusive. The polypeptide is NADPH dehydrogenase 1 (Saccharomyces pastorianus (Lager yeast)).